The primary structure comprises 733 residues: Cyclic nucleotide-gated channel (733 aa).

Disordered regions lie at residues 1–33 and 67–95; these read MSTA…PTAS and PNGN…IEVP. Over 1–125 the chain is Cytoplasmic; that stretch reads MSTAEPAPDP…PSTDNFYYWT (125 aa). The span at 12–25 shows a compositional bias: polar residues; it reads NPSTSGLAPTTNGI. Residues 126-148 form a helical membrane-spanning segment; sequence CVVTVAYIYNLLFVIARQVFNDL. Topologically, residues 149–197 are extracellular; it reads IGPSSQSLCRFYNGTLNSTTQVECTYNMLTNMKEMPTYSQYPDLGWSKY. A helical transmembrane segment spans residues 198–217; the sequence is WHFRMLWVFFDLLMDCVYLI. Over 218–251 the chain is Cytoplasmic; the sequence is DTFLNYRMGYMDQGLVVREAEKVTKAYWQSKQYR. The helical transmembrane segment at 252–265 threads the bilayer; it reads IDGISLIPLDYILG. The Extracellular portion of the chain corresponds to 266–276; sequence WPIPYINWRGL. The helical transmembrane segment at 277–287 threads the bilayer; it reads PILRLNRLIRY. The Cytoplasmic segment spans residues 288 to 308; sequence KRVRNCLERTETRSSMPNAFR. A helical membrane pass occupies residues 309 to 331; the sequence is VVVVVWYIVIIIHWNACLYFWIS. Residues 332-362 are Extracellular-facing; that stretch reads EWIGLGTDAWVYGHLNKQSLPDDITDTLLRR. 2 consecutive transmembrane segments (helical) span residues 363 to 385 and 386 to 411; these read YVYS…SPVR and NIEY…GNVG. Residues 376–379 form a selectivity filter region; that stretch reads TIGE. Residue glutamate 379 participates in Na(+) binding. The Cytoplasmic segment spans residues 412–733; it reads SMISNMSAAR…TGTESESLLK (322 aa). Residues 419–496 are C-linker; that stretch reads AARTEFQNKM…TLRKVRIFQD (78 aa). A cyclic nucleotide-binding domain region spans residues 493–607; the sequence is IFQDCEAGLL…ALREYPDARK (115 aa). Glycine 559 contributes to the 3',5'-cyclic GMP binding site. Residue glutamate 560 participates in 3',5'-cyclic AMP binding. 5 residues coordinate 3',5'-cyclic GMP: serine 562, arginine 575, threonine 576, lysine 619, and aspartate 620. Arginine 575 lines the 3',5'-cyclic AMP pocket. The interval 694 to 733 is disordered; that stretch reads SIDGGDISTDGVDERVRPPRLRQTKTIDLPTGTESESLLK.

It belongs to the cyclic nucleotide-gated cation channel (TC 1.A.1.5) family. In terms of assembly, homotetramer. In terms of tissue distribution, expressed at the sensory endings of thermosensory, gustatory, and olfactory neurons.

It is found in the cell membrane. Its subcellular location is the cell projection. The protein localises to the cilium. The enzyme catalyses Ca(2+)(in) = Ca(2+)(out). The catalysed reaction is Na(+)(in) = Na(+)(out). It carries out the reaction K(+)(in) = K(+)(out). Functionally, pore-forming subunit of the cyclic nucleotide-gated channel. Required for normal thermosensation and chemosensation sensory behavior. Required, downstream of receptor-type guanylate cyclase gcy-9, for CO2-mediated responses in BAG neurons. Required, downstream of receptor-type guanylate cyclase gcy-14, for alkaline pH-mediated responses in ASE-left (ASEL) neurons. Involved in the development of ASJ sensory neuron axon during late larval stages and in the maintenance of normal axon morphology in the adult. Regulates dauer formation. Required for the calcium flux to the cytoplasm in the ASJ sensory neurons upon the onset and removal of a nitric oxide (NO) stimulus, thereby promoting the ASJ-mediated behavioral avoidance response to NO-producing organisms like P.aeruginosa. In ASI and ASJ sensory neurons, controls behavioral response to P.aeruginosa by up-regulating the transcription of daf-7, a member of the TGF-beta family. In AWB and AWC sensory neurons, mediates the recognition of food odors which subsequently allows for the detection of preferred food sources. In AWC neurons, acts to promote expression of srsx-3, a member of the GPCR family. Binding to cGMP results in conformational changes at the hydrophobic gate that converts the protein from an inactive closed state to an active open state. In Caenorhabditis elegans, this protein is Cyclic nucleotide-gated channel (tax-4).